The following is a 530-amino-acid chain: Cytochrome P450 monooxygenase sttB (530 aa).

N-linked (GlcNAc...) asparagine glycosylation is present at Asn-5. A helical transmembrane segment spans residues 24 to 44 (LPILTVALLTGIASAVYINVS). Asn-230 carries N-linked (GlcNAc...) asparagine glycosylation.

It belongs to the cytochrome P450 family. It depends on heme as a cofactor.

Its subcellular location is the membrane. The catalysed reaction is preaspterpenacid acid I + reduced [NADPH--hemoprotein reductase] + O2 = preaspterpenacid acid II + oxidized [NADPH--hemoprotein reductase] + H2O + H(+). Its pathway is secondary metabolite biosynthesis; terpenoid biosynthesis. Cytochrome P450 monooxygenase; part of the gene cluster that mediates the biosynthesis of aspterpenacids. Performs the C22-oxidative modification of the terpene synthase sttA product preaspterpenacid I to produce preaspterpenacid II. It has still to be determined how preaspterpenacid II is further modified to produce aspterpenacids. This chain is Cytochrome P450 monooxygenase sttB, found in Aspergillus terreus (strain NIH 2624 / FGSC A1156).